Consider the following 604-residue polypeptide: MTVPPISERASFEVAKRLLCQILNEGLVSGTLETFESEEPYLCLFRNSCNTEKPEKCIRVRLQPSAQAGIFMRSARIVSLVRPEMLQMPVTLVDGTSERRELRSGALFQFASSLFTEHVEASTLEEIALGLENSEANTEKWLELHSSPGPLDLNSPSVLWERALIWGHPTHPFHRLCYAQEGLAPVEPRDLPEFLTPTLAFVSVLRDEISISGPFEESLQPLLAQLDVPAPETADRVVVPCLRLQLPCVFRHFPSAVLVKTVSGCADTQASMRTLTLRPELNFPYHIKLSIACQITSDVRAIRPCQTLGGQLVRKQLHEFFPPDLWWFKEVASVAGNQTAQGDTQENEDKARHIGCILREDLEARANANNEALIIAGSLAQQPANDPRTHAEIVFGLETVEQKHDWLKEYVAGFLRAVLPSLVQYGIGMEAHGQNALVRVCRDTRKITGFVVRDFEGIKVHVPTLEKLGINLCMTSPGCTKNLEDIWSKIHHSIFQNHLGNLVYALGLDRHDGWTIIRDELFAALKPDTDPRAKELYDFILQDTMPFKCFLRMRMSEHFNDYDGDEQDQPRVKRDERPLPNALLMGSARWEKVLNECAPKKLES.

The catalysed reaction is cyclo(L-arginyl-(Z)-dehydro-4-O-homoseryl-tyrosyl) + citrate + ATP = NK13650 B + AMP + diphosphate + H(+). It functions in the pathway secondary metabolite biosynthesis. In terms of biological role, NRPS-independent siderophore synthetase-like protein; part of the ank cluster that mediates the biosynthesis of NK13650 C, a highly modified cyclo-arginine-tyrosine dipeptide. AnkE is responsible of the production of NK13650 B via ligation of citrate to the ankD product. Within the pathway, the cyclodipeptide synthase ankA acts as the scaffold-generating enzyme and is responsible for formation of the cyclo-Arg-Tyr diketopiperazine (cRY) from L-Arg and L-Tyr. The ankA product cRY is desaturated by the cytochrome P450 monooxygenase ankB to yield a dehydro-cyclodipeptide intermediate. The FAD-dependent monooxygenase ankC then installs the m-OH, ankD catalyzes the attachment of L-homoserine, and ankE ligates citrate to the ankD product to yield NK13650 B. The O-methyltransferase ankF is responsible for methylation of the C-17 phenol group of NK13650 B to produce NK13650 D. Amidation of NK13650 D with L-Asp by ankG then leads to the production of NK13650 C, whereas amidation of NK13650 B produces NK13650 A. The polypeptide is NRPS-independent siderophore synthetase-like protein ankE (Aspergillus thermomutatus (Neosartorya pseudofischeri)).